Consider the following 382-residue polypeptide: Pyrimidine monooxygenase RutA (382 aa).

FMN is bound by residues 68-69, N134, E143, 159-160, and S209; these read IK and RY.

Belongs to the NtaA/SnaA/DszA monooxygenase family. RutA subfamily.

The enzyme catalyses uracil + FMNH2 + NADH + O2 = (Z)-3-ureidoacrylate + FMN + NAD(+) + H2O + H(+). It catalyses the reaction thymine + FMNH2 + NADH + O2 = (Z)-2-methylureidoacrylate + FMN + NAD(+) + H2O + H(+). Functionally, catalyzes the pyrimidine ring opening between N-3 and C-4 by an unusual flavin hydroperoxide-catalyzed mechanism, adding oxygen atoms in the process to yield ureidoacrylate peracid, that immediately reacts with FMN forming ureidoacrylate and FMN-N(5)-oxide. The FMN-N(5)-oxide reacts spontaneously with NADH to produce FMN. Requires the flavin reductase RutF to regenerate FMN in vivo. In Escherichia coli O55:H7 (strain CB9615 / EPEC), this protein is Pyrimidine monooxygenase RutA.